The following is an 873-amino-acid chain: Nonsense-mediated mRNA decay factor SMG8 (873 aa).

The segment at 531-604 (AKKMAQREDE…ESMASKTERE (74 aa)) is disordered. Acidic residues predominate over residues 540 to 550 (ELAEEDTDLDI). Low complexity-rich tracts occupy residues 551 to 562 (PESLLDPDSTSP) and 574 to 583 (SSSESSSQES). The segment covering 591-604 (SRRDESMASKTERE) has biased composition (basic and acidic residues).

It belongs to the SMG8 family.

In terms of biological role, involved in nonsense-mediated decay (NMD) of mRNAs containing premature stop codons. Probable component of kinase complex containing smg-1 and recruited to stalled ribosomes. The protein is Nonsense-mediated mRNA decay factor SMG8 (smg-8) of Caenorhabditis elegans.